An 873-amino-acid chain; its full sequence is Probable inorganic carbon transporter subunit DabA (873 aa).

Zn(2+) contacts are provided by cysteine 393, aspartate 395, histidine 575, and cysteine 590.

The protein belongs to the inorganic carbon transporter (TC 9.A.2) DabA family. As to quaternary structure, forms a complex with DabB. The cofactor is Zn(2+).

It localises to the cell membrane. In terms of biological role, part of an energy-coupled inorganic carbon pump. In Bacillus licheniformis (strain ATCC 14580 / DSM 13 / JCM 2505 / CCUG 7422 / NBRC 12200 / NCIMB 9375 / NCTC 10341 / NRRL NRS-1264 / Gibson 46), this protein is Probable inorganic carbon transporter subunit DabA.